Consider the following 267-residue polypeptide: 14-3-3-like protein GF14 phi (267 aa).

Ala-2 is modified (N-acetylalanine). A phosphoserine mark is found at Ser-73 and Ser-196. At Thr-217 the chain carries Phosphothreonine. The disordered stretch occupies residues 244 to 267 (MQDESPEEIKEAAAPKPAEEQKEI). Ser-248 bears the Phosphoserine mark. Basic and acidic residues predominate over residues 250–267 (EEIKEAAAPKPAEEQKEI).

Belongs to the 14-3-3 family. Interacts with FD. Interacts with CINV1.

It localises to the nucleus. Its subcellular location is the cytoplasm. Its function is as follows. Is associated with a DNA binding complex that binds to the G box, a well-characterized cis-acting DNA regulatory element found in plant genes. The sequence is that of 14-3-3-like protein GF14 phi (GRF4) from Arabidopsis thaliana (Mouse-ear cress).